A 548-amino-acid polypeptide reads, in one-letter code: Synaptic vesicle 2-related protein (548 aa).

The Cytoplasmic segment spans residues 1–87; it reads MEEDLFQLRQ…GFGKFQWKLS (87 aa). Phosphoserine is present on residues S25 and S31. A helical membrane pass occupies residues 88 to 108; sequence VLTGLAWMADAMEMMILSILA. Over 109–122 the chain is Vesicular; sequence PQLHCEWRLPSWQV. Residues 123 to 143 traverse the membrane as a helical segment; that stretch reads ALLTSVVFVGMMSSSTLWGNI. Residues 144-156 are Cytoplasmic-facing; the sequence is SDQYGRKTGLKIS. A helical membrane pass occupies residues 157 to 177; it reads VLWTLYYGILSAFAPVYSWIL. The Vesicular segment spans residues 178-180; sequence VLR. A helical membrane pass occupies residues 181 to 201; it reads GLVGFGIGGVPQSVTLYAEFL. Residues 202 to 209 lie on the Cytoplasmic side of the membrane; it reads PMKARAKC. The chain crosses the membrane as a helical span at residues 210 to 230; the sequence is ILLIEVFWAIGTVFEVVLAVF. At 231–238 the chain is on the vesicular side; the sequence is VMPSLGWR. The chain crosses the membrane as a helical span at residues 239 to 259; sequence WLLILSAVPLLLFAVLCFWLP. The Cytoplasmic segment spans residues 260 to 316; sequence ESARYDVLSGNQEKAIATLKRIATENGAPMPLGKLIISRQEDRGKMRDLFTPHFRWT. A helical transmembrane segment spans residues 317 to 337; the sequence is TLLLWFIWFSNAFSYYGLVLL. Topologically, residues 338–373 are vesicular; sequence TTELFQAGDVCGISSRKKAVEAKCSLACEYLSEEDY. A helical transmembrane segment spans residues 374 to 394; the sequence is MDLLWTTLSEFPGVLVTLWII. The Cytoplasmic portion of the chain corresponds to 395–401; it reads DRLGRKK. A helical transmembrane segment spans residues 402 to 422; it reads TMALCFVIFSFCSLLLFICVG. The Vesicular portion of the chain corresponds to 423-424; that stretch reads RN. A helical membrane pass occupies residues 425 to 445; the sequence is VLTLLLFIARAFISGGFQAAY. Over 446-457 the chain is Cytoplasmic; that stretch reads VYTPEVYPTATR. A helical membrane pass occupies residues 458 to 478; sequence ALGLGTCSGMARVGALITPFI. Residues 479-489 lie on the Vesicular side of the membrane; sequence AQVMLESSVYL. The helical transmembrane segment at 490 to 510 threads the bilayer; that stretch reads TLAVYSGCCLLAALASCFLPI. The Cytoplasmic portion of the chain corresponds to 511-548; it reads ETKGRGLQESSHREWGQEMVGRGMHGADVTRSNSGSQE. Residue S542 is modified to Phosphoserine.

Belongs to the major facilitator superfamily.

Its subcellular location is the cytoplasmic vesicle. The protein resides in the secretory vesicle. It localises to the synaptic vesicle membrane. The sequence is that of Synaptic vesicle 2-related protein (SVOP) from Pongo abelii (Sumatran orangutan).